Here is a 920-residue protein sequence, read N- to C-terminus: Protein FAN (920 aa).

Positions Arg-176–Arg-247 constitute a GRAM domain. One can recognise a BEACH-type PH domain in the interval Ser-189–Ala-286. Residues Glu-290–Arg-575 enclose the BEACH domain. WD repeat units follow at residues Ile-631–Ser-661, Phe-673–Ser-703, Gly-715–Ser-743, Glu-764–Asp-794, Cys-806–Asp-836, and Gly-887–Lys-917.

Its function is as follows. Couples the p55 TNF-receptor (TNF-R55 / TNFR1) to neutral sphingomyelinase (N-SMASE). Specifically binds to the N-smase activation domain of TNF-R55. May regulate ceramide production by N-SMASE. The sequence is that of Protein FAN (Nsmaf) from Mus musculus (Mouse).